A 189-amino-acid polypeptide reads, in one-letter code: Elongation factor P (189 aa).

It belongs to the elongation factor P family.

It localises to the cytoplasm. It functions in the pathway protein biosynthesis; polypeptide chain elongation. Involved in peptide bond synthesis. Stimulates efficient translation and peptide-bond synthesis on native or reconstituted 70S ribosomes in vitro. Probably functions indirectly by altering the affinity of the ribosome for aminoacyl-tRNA, thus increasing their reactivity as acceptors for peptidyl transferase. This Aster yellows witches'-broom phytoplasma (strain AYWB) protein is Elongation factor P.